Consider the following 154-residue polypeptide: Actin-related protein 2/3 complex subunit 5 (154 aa).

Threonine 142 carries the post-translational modification Phosphothreonine.

The protein belongs to the ARPC5 family. As to quaternary structure, component of the Arp2/3 complex composed of ARP2, ARP3, ARC40/p41-ARC, ARC35/p34-ARC, ARC18/p21-ARC, ARC19/p20-ARC and ARC16/p16-ARC.

It is found in the cytoplasm. It localises to the cytoskeleton. Its subcellular location is the actin patch. Its function is as follows. Functions as a component of the Arp2/3 complex which is involved in regulation of actin polymerization and together with an activating nucleation-promoting factor (NPF) mediates the formation of branched actin networks. In Saccharomyces cerevisiae (strain ATCC 204508 / S288c) (Baker's yeast), this protein is Actin-related protein 2/3 complex subunit 5 (ARC15).